A 466-amino-acid polypeptide reads, in one-letter code: 3-isopropylmalate dehydratase large subunit (466 aa).

Cys-347, Cys-407, and Cys-410 together coordinate [4Fe-4S] cluster.

It belongs to the aconitase/IPM isomerase family. LeuC type 1 subfamily. In terms of assembly, heterodimer of LeuC and LeuD. [4Fe-4S] cluster is required as a cofactor.

It carries out the reaction (2R,3S)-3-isopropylmalate = (2S)-2-isopropylmalate. It functions in the pathway amino-acid biosynthesis; L-leucine biosynthesis; L-leucine from 3-methyl-2-oxobutanoate: step 2/4. In terms of biological role, catalyzes the isomerization between 2-isopropylmalate and 3-isopropylmalate, via the formation of 2-isopropylmaleate. The polypeptide is 3-isopropylmalate dehydratase large subunit (Shigella flexneri serotype 5b (strain 8401)).